The chain runs to 502 residues: Cytochrome P450 2J2 (502 aa).

Position 448 (C448) interacts with heme.

It belongs to the cytochrome P450 family. Heme serves as cofactor. In terms of tissue distribution, highly expressed in heart, present at lower levels in liver, kidney and skeletal muscle (at protein level).

It is found in the endoplasmic reticulum membrane. The protein localises to the microsome membrane. It carries out the reaction (5Z,8Z,11Z,14Z)-eicosatetraenoate + reduced [NADPH--hemoprotein reductase] + O2 = 5,6-epoxy-(8Z,11Z,14Z)-eicosatrienoate + oxidized [NADPH--hemoprotein reductase] + H2O + H(+). It catalyses the reaction (5Z,8Z,11Z,14Z)-eicosatetraenoate + reduced [NADPH--hemoprotein reductase] + O2 = (8R,9S)-epoxy-(5Z,11Z,14Z)-eicosatrienoate + oxidized [NADPH--hemoprotein reductase] + H2O + H(+). The enzyme catalyses (5Z,8Z,11Z,14Z)-eicosatetraenoate + reduced [NADPH--hemoprotein reductase] + O2 = (8S,9R)-epoxy-(5Z,11Z,14Z)-eicosatrienoate + oxidized [NADPH--hemoprotein reductase] + H2O + H(+). The catalysed reaction is (5Z,8Z,11Z,14Z)-eicosatetraenoate + reduced [NADPH--hemoprotein reductase] + O2 = (11R,12S)-epoxy-(5Z,8Z,14Z)-eicosatrienoate + oxidized [NADPH--hemoprotein reductase] + H2O + H(+). It carries out the reaction (5Z,8Z,11Z,14Z)-eicosatetraenoate + reduced [NADPH--hemoprotein reductase] + O2 = (11S,12R)-epoxy-(5Z,8Z,14Z)-eicosatrienoate + oxidized [NADPH--hemoprotein reductase] + H2O + H(+). It catalyses the reaction (5Z,8Z,11Z,14Z)-eicosatetraenoate + reduced [NADPH--hemoprotein reductase] + O2 = (14R,15S)-epoxy-(5Z,8Z,11Z)-eicosatrienoate + oxidized [NADPH--hemoprotein reductase] + H2O + H(+). The enzyme catalyses (5Z,8Z,11Z,14Z)-eicosatetraenoate + reduced [NADPH--hemoprotein reductase] + O2 = (14S,15R)-epoxy-(5Z,8Z,11Z)-eicosatrienoate + oxidized [NADPH--hemoprotein reductase] + H2O + H(+). The catalysed reaction is (15S)-hydroperoxy-(5Z,8Z,11Z,13E)-eicosatetraenoate = (13S)-hydroxy-(14S,15S)-epoxy-(5Z,8Z,11Z)-eicosatrienoate. It carries out the reaction (15S)-hydroperoxy-(5Z,8Z,11Z,13E)-eicosatetraenoate = (13R)-hydroxy-(14S,15S)-epoxy-(5Z,8Z,11Z)-eicosatrienoate. It catalyses the reaction (5Z,8Z,11Z,14Z,17Z)-eicosapentaenoate + reduced [NADPH--hemoprotein reductase] + O2 = (17R,18S)-epoxy-(5Z,8Z,11Z,14Z)-eicosatetraenoate + oxidized [NADPH--hemoprotein reductase] + H2O + H(+). The enzyme catalyses (5Z,8Z,11Z,14Z,17Z)-eicosapentaenoate + reduced [NADPH--hemoprotein reductase] + O2 = (17S,18R)-epoxy-(5Z,8Z,11Z,14Z)-eicosatetraenoate + oxidized [NADPH--hemoprotein reductase] + H2O + H(+). The catalysed reaction is (4Z,7Z,10Z,13Z,16Z,19Z)-docosahexaenoate + reduced [NADPH--hemoprotein reductase] + O2 = (19R,20S)-epoxy-(4Z,7Z,10Z,13Z,16Z)-docosapentaenoate + oxidized [NADPH--hemoprotein reductase] + H2O + H(+). It carries out the reaction (4Z,7Z,10Z,13Z,16Z,19Z)-docosahexaenoate + reduced [NADPH--hemoprotein reductase] + O2 = (19S,20R)-epoxy-(4Z,7Z,10Z,13Z,16Z)-docosapentaenoate + oxidized [NADPH--hemoprotein reductase] + H2O + H(+). It catalyses the reaction albendazole + reduced [NADPH--hemoprotein reductase] + O2 = hydroxyalbendazole + oxidized [NADPH--hemoprotein reductase] + H2O + H(+). The enzyme catalyses albendazole + reduced [NADPH--hemoprotein reductase] + O2 = albendazole S-oxide + oxidized [NADPH--hemoprotein reductase] + H2O + H(+). The catalysed reaction is fenbendazole + reduced [NADPH--hemoprotein reductase] + O2 = fenbendazole S-oxide + oxidized [NADPH--hemoprotein reductase] + H2O + H(+). Its pathway is lipid metabolism; arachidonate metabolism. A cytochrome P450 monooxygenase involved in the metabolism of polyunsaturated fatty acids (PUFA) in the cardiovascular system. Mechanistically, uses molecular oxygen inserting one oxygen atom into a substrate, and reducing the second into a water molecule, with two electrons provided by NADPH via cytochrome P450 reductase (NADPH--hemoprotein reductase). Catalyzes the epoxidation of double bonds of PUFA. Converts arachidonic acid to four regioisomeric epoxyeicosatrienoic acids (EpETrE), likely playing a major role in the epoxidation of endogenous cardiac arachidonic acid pools. In endothelial cells, participates in eicosanoids metabolism by converting hydroperoxide species into hydroxy epoxy metabolites. In combination with 15-lipoxygenase metabolizes arachidonic acid and converts hydroperoxyicosatetraenoates (HpETEs) into hydroxy epoxy eicosatrienoates (HEETs), which are precursors of vasodilatory trihydroxyicosatrienoic acids (THETAs). This hydroperoxide isomerase activity is NADPH- and O2-independent. Catalyzes the monooxygenation of a various xenobiotics, such as danazol, amiodarone, terfenadine, astemizole, thioridazine, tamoxifen, cyclosporin A and nabumetone. Catalyzes hydroxylation of the anthelmintics albendazole and fenbendazole. Catalyzes the sulfoxidation of fenbedazole. The chain is Cytochrome P450 2J2 from Homo sapiens (Human).